We begin with the raw amino-acid sequence, 948 residues long: PHD finger protein 14 (948 aa).

The disordered stretch occupies residues 22–302; the sequence is DYDSSDDSDF…LSQSKSNEDS (281 aa). 2 positions are modified to phosphoserine: Ser26 and Ser29. The span at 36–47 shows a compositional bias: low complexity; it reads ASDSEGSGNGSE. Residues 60–71 are compositionally biased toward acidic residues; it reads DSEENILEEELN. The span at 72 to 85 shows a compositional bias: basic and acidic residues; sequence EDIKVKEEQLKNSA. Phosphoserine occurs at positions 84 and 91. Composition is skewed to basic and acidic residues over residues 95 to 110 and 117 to 139; these read QLIK…NGER and KEKE…EKAT. The segment covering 140 to 174 has biased composition (low complexity); it reads VSENVAASAAATTPATSPPAVNTSPSVPTTTTATE. Ser196 is subject to Phosphoserine. Composition is skewed to acidic residues over residues 199–212 and 233–256; these read ELND…EDDN and DGDN…EGND. At Tyr206 the chain carries Phosphotyrosine. A Phosphoserine modification is found at Ser208. A Phosphothreonine modification is found at Thr287. Positions 288 to 297 are enriched in polar residues; sequence NDSLTLSQSK. Ser290, Ser294, Ser298, Ser302, and Ser308 each carry phosphoserine. The PHD-type 1 zinc-finger motif lies at 319–380; that stretch reads ILICCVCLGD…PWFCDACKCG (62 aa). The Zn(2+) site is built by Cys322, Cys325, Cys339, Cys342, His347, and Cys350. At Ser359 the chain carries Phosphoserine. Positions 374, 377, 385, 388, 405, 408, 441, 444, 458, 463, 468, 471, 495, and 498 each coordinate Zn(2+). The C2HC pre-PHD-type zinc finger occupies 382-415; that stretch reads SPSCELCPNQDGIFKETDAGRWVHIVCALYVPGV. The segment at 439–499 adopts a PHD-type 2 zinc-finger fold; sequence KECSFCEDPR…PFFAYCKQHA (61 aa). Ser530 bears the Phosphoserine mark. Residues 630 to 678 adopt a coiled-coil conformation; that stretch reads MIQIQENMAEQKNIKDKLENEQEKLHVEYNKLCESLEELQNLNGKLRSE. A Glycyl lysine isopeptide (Lys-Gly) (interchain with G-Cter in SUMO2) cross-link involves residue Glu648. Phosphoserine is present on Gln651. A PHD-type 3 zinc finger spans residues 725 to 779; that stretch reads LYSCGICKKNHDQHLLLLCDTCKLHYHLGCLDPPLTRMPRKTKNSYWQCSECDQA. Zn(2+) contacts are provided by Cys728, Cys731, Cys743, Cys746, His751, Cys754, Cys773, and Cys776. A phosphoserine mark is found at Ser781, Ser782, and Ser835. Positions 811–862 are disordered; sequence VPQDVPPEPKKIPIRNTRTRGRKRSFVPEEEKHEERVPRERRQRQSVLQKKP. Residues 836–850 are compositionally biased toward basic and acidic residues; the sequence is FVPEEEKHEERVPRE. The segment at 868 to 921 adopts a PHD-type 4 zinc-finger fold; it reads RTECATCKGTGDNENLVRCDECRLCYHFGCLDPPLKKSPKQTGYGWICQECDSS. Residues Cys871, Cys874, Cys886, Cys889, His894, Cys897, Cys915, and Cys918 each coordinate Zn(2+). A disordered region spans residues 920–948; the sequence is SSSSKEDENEAERKNISQELNMEQKNPKK. Basic and acidic residues predominate over residues 922–935; the sequence is SSKEDENEAERKNI. Over residues 936 to 948 the composition is skewed to polar residues; the sequence is SQELNMEQKNPKK.

The protein localises to the nucleus. It is found in the chromosome. The protein resides in the cytoplasm. Its function is as follows. Histone-binding protein. Binds preferentially to unmodified histone H3 but can also bind to a lesser extent to histone H3 trimethylated at 'Lys-9' (H3K9me3) as well as to histone H3 monomethylated at 'Lys-27' (H3K27ac) and trimethylated at 'Lys-27' (H3K27me3). Represses PDGFRA expression, thus playing a role in regulation of mesenchymal cell proliferation. Suppresses the expression of CDKN1A/p21 by reducing the level of trimethylation of histone H3 'Lys-4', leading to enhanced proliferation of germinal center B cells. The protein is PHD finger protein 14 (PHF14) of Homo sapiens (Human).